Reading from the N-terminus, the 95-residue chain is Small ribosomal subunit protein uS14 (95 aa).

This sequence belongs to the universal ribosomal protein uS14 family. In terms of assembly, part of the 30S ribosomal subunit. Contacts proteins S3 and S10.

Functionally, binds 16S rRNA, required for the assembly of 30S particles and may also be responsible for determining the conformation of the 16S rRNA at the A site. The polypeptide is Small ribosomal subunit protein uS14 (rpsN) (Carsonella ruddii).